The primary structure comprises 363 residues: Adenylate cyclase 2 (363 aa).

Positions 157–286 constitute a Guanylate cyclase domain; sequence VFLFIDLAGS…DTVNTTARLE (130 aa). Mg(2+)-binding residues include Asp162 and Asp206. Positions 341 to 363 are disordered; sequence GDGATEPAGETVRSPAAEAFTSL.

The protein belongs to the adenylyl cyclase class-3 family. Mg(2+) serves as cofactor.

It carries out the reaction ATP = 3',5'-cyclic AMP + diphosphate. Its function is as follows. Plays essential roles in regulation of cellular metabolism by catalyzing the synthesis of a second messenger, cAMP. This chain is Adenylate cyclase 2 (cya2), found in Rhizobium meliloti (strain 1021) (Ensifer meliloti).